The following is a 305-amino-acid chain: Auxin-responsive protein IAA27 (305 aa).

The EAR-like (transcriptional repression) signature appears at 45–49; the sequence is LRLGL. 2 disordered regions span residues 96-119 and 155-180; these read TTATGDVGSGSGPRTSVVKDGKST and KNSMASSQSQKPGNNSETEEAEAKSG. Residues 155-170 are compositionally biased toward polar residues; sequence KNSMASSQSQKPGNNS. The PB1 domain maps to 185 to 287; that stretch reads CLYVKVSMEG…SCKKLRIMKS (103 aa).

Belongs to the Aux/IAA family. In terms of assembly, homodimers and heterodimers. Interacts with phytochrome A. Interacts with TPL.

The protein localises to the nucleus. In terms of biological role, aux/IAA proteins are short-lived transcriptional factors that function as repressors of early auxin response genes at low auxin concentrations. Repression is thought to result from the interaction with auxin response factors (ARFs), proteins that bind to the auxin-responsive promoter element (AuxRE). Formation of heterodimers with ARF proteins may alter their ability to modulate early auxin response genes expression. This Arabidopsis thaliana (Mouse-ear cress) protein is Auxin-responsive protein IAA27 (IAA27).